We begin with the raw amino-acid sequence, 172 residues long: uncharacterized protein (172 aa).

3 helical membrane-spanning segments follow: residues Ile7 to Ile27, Leu59 to Phe79, and Phe89 to Lys109.

This sequence to M.jannaschii MJ0695.

The protein localises to the cell membrane. This is an uncharacterized protein from Methanocaldococcus jannaschii (strain ATCC 43067 / DSM 2661 / JAL-1 / JCM 10045 / NBRC 100440) (Methanococcus jannaschii).